A 425-amino-acid polypeptide reads, in one-letter code: Pleckstrin homology domain-containing family A member 2 (425 aa).

In terms of domain architecture, PH 1 spans 7-113 (QNRICGFLDI…WVEALNQASK (107 aa)). Residue Lys-141 forms a Glycyl lysine isopeptide (Lys-Gly) (interchain with G-Cter in SUMO2) linkage. Ser-184 bears the Phosphoserine mark. The region spanning 198-298 (PLIKSGYCVK…WIKEIGAAVQ (101 aa)) is the PH 2 domain. Low complexity predominate over residues 312–330 (SISLTRPGSSSLSSGPNSI). A disordered region spans residues 312-332 (SISLTRPGSSSLSSGPNSILC). Phosphoserine is present on residues Ser-314 and Ser-349. The disordered stretch occupies residues 352–425 (SSWQPWTPVP…DDENIRTSDV (74 aa)). The span at 400–410 (RSEPQHPKEKP) shows a compositional bias: basic and acidic residues.

Binds MPDZ and PTPN13. In terms of tissue distribution, highly expressed in heart, kidney, spleen and peripheral blood leukocytes. Detected at lower levels in brain, skeletal muscle, colon, thymus, liver, small intestine, placenta and lung.

Its subcellular location is the cytoplasm. It localises to the cell membrane. The protein resides in the nucleus. In terms of biological role, binds specifically to phosphatidylinositol 3,4-diphosphate (PtdIns3,4P2), but not to other phosphoinositides. May recruit other proteins to the plasma membrane. The sequence is that of Pleckstrin homology domain-containing family A member 2 (PLEKHA2) from Homo sapiens (Human).